The following is a 180-amino-acid chain: Acireductone dioxygenase 1 (180 aa).

Fe(2+) is bound by residues H82, H84, E88, and H127. Positions 82, 84, 88, and 127 each coordinate Ni(2+).

This sequence belongs to the acireductone dioxygenase (ARD) family. Requires Fe(2+) as cofactor. Ni(2+) is required as a cofactor.

The protein localises to the cytoplasm. It is found in the nucleus. The catalysed reaction is 1,2-dihydroxy-5-(methylsulfanyl)pent-1-en-3-one + O2 = 4-methylsulfanyl-2-oxobutanoate + formate + 2 H(+). It catalyses the reaction 1,2-dihydroxy-5-(methylsulfanyl)pent-1-en-3-one + O2 = 3-(methylsulfanyl)propanoate + CO + formate + 2 H(+). Its pathway is amino-acid biosynthesis; L-methionine biosynthesis via salvage pathway; L-methionine from S-methyl-5-thio-alpha-D-ribose 1-phosphate: step 5/6. Catalyzes 2 different reactions between oxygen and the acireductone 1,2-dihydroxy-3-keto-5-methylthiopentene (DHK-MTPene) depending upon the metal bound in the active site. Fe-containing acireductone dioxygenase (Fe-ARD) produces formate and 2-keto-4-methylthiobutyrate (KMTB), the alpha-ketoacid precursor of methionine in the methionine recycle pathway. Ni-containing acireductone dioxygenase (Ni-ARD) produces methylthiopropionate, carbon monoxide and formate, and does not lie on the methionine recycle pathway. The sequence is that of Acireductone dioxygenase 1 from Sorghum bicolor (Sorghum).